Here is a 23-residue protein sequence, read N- to C-terminus: DVNGGWSCATTVDAKFRPNGCTD.

A disulfide bond links Cys-8 and Cys-21.

This sequence belongs to the N-Me-Phe pilin family. The pili are polar flexible filaments of about 5.4 nanometers diameter and 2.5 micrometers average length; they consist of only a single polypeptide chain arranged in a helical configuration of five subunits per turn in the assembled pilus.

It localises to the fimbrium. The protein is Fimbrial protein (pil) of Pseudomonas aeruginosa.